Here is a 368-residue protein sequence, read N- to C-terminus: tRNA/tmRNA (uracil-C(5))-methyltransferase (368 aa).

S-adenosyl-L-methionine-binding residues include Q190, Y218, N223, E239, and D301. Residue C326 is the Nucleophile of the active site. E360 serves as the catalytic Proton acceptor.

Belongs to the class I-like SAM-binding methyltransferase superfamily. RNA M5U methyltransferase family. TrmA subfamily.

The catalysed reaction is uridine(54) in tRNA + S-adenosyl-L-methionine = 5-methyluridine(54) in tRNA + S-adenosyl-L-homocysteine + H(+). The enzyme catalyses uridine(341) in tmRNA + S-adenosyl-L-methionine = 5-methyluridine(341) in tmRNA + S-adenosyl-L-homocysteine + H(+). Dual-specificity methyltransferase that catalyzes the formation of 5-methyluridine at position 54 (m5U54) in all tRNAs, and that of position 341 (m5U341) in tmRNA (transfer-mRNA). The protein is tRNA/tmRNA (uracil-C(5))-methyltransferase of Photobacterium profundum (strain SS9).